A 155-amino-acid chain; its full sequence is Ribosome maturation factor RimP (155 aa).

This sequence belongs to the RimP family.

It localises to the cytoplasm. In terms of biological role, required for maturation of 30S ribosomal subunits. This chain is Ribosome maturation factor RimP, found in Dichelobacter nodosus (strain VCS1703A).